Consider the following 339-residue polypeptide: GTPase Obg (339 aa).

The Obg domain maps to 1-158; that stretch reads MKFLDQVDLR…RDLTFELKLM (158 aa). 2 disordered regions span residues 66 to 86 and 125 to 148; these read FAED…GEDK and GNAF…PGEE. A compositionally biased stretch (basic and acidic residues) spans 72-86; the sequence is PGGRREQTGASGEDK. The span at 129–138 shows a compositional bias: polar residues; the sequence is FKSSTNQAPR. Residues 159 to 329 form the OBG-type G domain; the sequence is ADVGLVGFPN…LKYTLFDTVH (171 aa). Residues 165-172, 190-194, 212-215, 279-282, and 310-312 contribute to the GTP site; these read GFPNAGKS, FTTLT, DIPG, SKID, and SAV. The Mg(2+) site is built by Ser-172 and Thr-192.

This sequence belongs to the TRAFAC class OBG-HflX-like GTPase superfamily. OBG GTPase family. In terms of assembly, monomer. Mg(2+) is required as a cofactor.

It localises to the cytoplasm. Functionally, an essential GTPase which binds GTP, GDP and possibly (p)ppGpp with moderate affinity, with high nucleotide exchange rates and a fairly low GTP hydrolysis rate. Plays a role in control of the cell cycle, stress response, ribosome biogenesis and in those bacteria that undergo differentiation, in morphogenesis control. The protein is GTPase Obg of Salinibacter ruber (strain DSM 13855 / M31).